We begin with the raw amino-acid sequence, 445 residues long: Phosphoglucosamine mutase (445 aa).

Ser-102 (phosphoserine intermediate) is an active-site residue. Ser-102, Asp-241, Asp-243, and Asp-245 together coordinate Mg(2+). At Ser-102 the chain carries Phosphoserine.

Belongs to the phosphohexose mutase family. It depends on Mg(2+) as a cofactor. In terms of processing, activated by phosphorylation.

It carries out the reaction alpha-D-glucosamine 1-phosphate = D-glucosamine 6-phosphate. In terms of biological role, catalyzes the conversion of glucosamine-6-phosphate to glucosamine-1-phosphate. This is Phosphoglucosamine mutase from Shewanella oneidensis (strain ATCC 700550 / JCM 31522 / CIP 106686 / LMG 19005 / NCIMB 14063 / MR-1).